Consider the following 533-residue polypeptide: Zinc finger protein 692 (533 aa).

Disordered regions lie at residues 124 to 251 (SLIP…PATL) and 290 to 310 (TESL…TCDE). Residues 149–178 (EARRKQEAEGLECEHRERTQETRLSRRVEP) are compositionally biased toward basic and acidic residues. Over residues 190 to 208 (QVVEEEEEEEEEEEEEELL) the composition is skewed to acidic residues. The residue at position 233 (Ser233) is a Phosphoserine. A compositionally biased stretch (polar residues) spans 290–305 (TESLDSPGSQAQSAPN). 5 C2H2-type zinc fingers span residues 329–354 (MPCD…KYQH), 360–384 (FCCP…VKLH), 390–412 (YICE…RRIH), 418–440 (LQCE…RRKH), and 449–472 (FPCE…SKSH). At Ser471 the chain carries Phosphoserine. The interval 478–533 (VQESPGSLGSSPSISAPEPLQSPEGTSFSTSYDSNPAPSTSISSPGVPAPRNTEKS) is disordered. The span at 481–492 (SPGSLGSSPSIS) shows a compositional bias: low complexity. Over residues 500-521 (PEGTSFSTSYDSNPAPSTSISS) the composition is skewed to polar residues.

Belongs to the krueppel C2H2-type zinc-finger protein family. In terms of processing, phosphorylation at Ser-471 results in loss of DNA-binding activity.

It is found in the nucleus. Its function is as follows. May act as an transcriptional repressor for PCK1 gene expression, in turns may participate in the hepatic gluconeogenesis regulation through the activated AMPK signaling pathway. The chain is Zinc finger protein 692 from Rattus norvegicus (Rat).